The primary structure comprises 86 residues: Putative pro-MCH-like protein 1 (86 aa).

Residues 31 to 49 form an NGE-like region; the sequence is GSVAFPAENGVQDTESTQE. Positions 38 to 62 are disordered; the sequence is ENGVQDTESTQEKRETGDEENSAKF. The tract at residues 52 to 64 is NEI-like; that stretch reads ETGDEENSAKFPV. Positions 68-86 are melanin-concentrating hormone-like; it reads DFDTLSCMLGRVYQSCWQV.

This sequence belongs to the melanin-concentrating hormone family. Expressed in testis and brain.

The sequence is that of Putative pro-MCH-like protein 1 (PMCHL1) from Homo sapiens (Human).